The sequence spans 483 residues: MIQVLLVTLCLAAFPYQGSSIILESGNVNDYEVLYPQKVTALPKGAVQPKYEDTMQYEFKVNGEPVVLHLEKNKGLFSKDYSETHYSSDGRKITTNPPVEDHCYYHGRIQNDADSTASISACNGLKGHFKLQGETYLIEPLKLSDSEAHAVYKYENVEKEDEAPKMCGVTQTNWESDEPIKKASQLNLTPEQQGFPQRYIELVVVADHRMFTKYNGNLNTIRIWVHELVNTMNVFYRPLNIRVSLTDLEVWSDQDLINVQPAAADTLEAFGDWRETVLLNRISHDNAQLLTAIELDGETIGLANRGTMCDPKLSTGIVQDHSAINLWVAVTMAHEMGHNLGISHDGNQCHCDANSCIMSEELREQLSFEFSDCSQNQYQTYLTDHNPQCMLNEPLRTDIVSTPVSGNELLETGEESDFDAPANPCCDAATCKLTTGSQCADGLCCDQCKFMKEGTVCRRARGDDLDDYCNGISAGCPRNPFHA.

The first 20 residues, 1-20, serve as a signal peptide directing secretion; that stretch reads MIQVLLVTLCLAAFPYQGSS. A propeptide spanning residues 21–190 is cleaved from the precursor; sequence IILESGNVND…KKASQLNLTP (170 aa). One can recognise a Peptidase M12B domain in the interval 198-394; sequence RYIELVVVAD…HNPQCMLNEP (197 aa). Ca(2+) contacts are provided by glutamate 201 and aspartate 285. Intrachain disulfides connect cysteine 309–cysteine 389, cysteine 349–cysteine 373, and cysteine 351–cysteine 356. Residue histidine 334 participates in Zn(2+) binding. Residue glutamate 335 is part of the active site. Zn(2+)-binding residues include histidine 338 and histidine 344. Positions 389 and 392 each coordinate Ca(2+). The propeptide occupies 395–418; the sequence is LRTDIVSTPVSGNELLETGEESDF. Residues 402-483 enclose the Disintegrin domain; sequence TPVSGNELLE…AGCPRNPFHA (82 aa). Disulfide bonds link cysteine 425/cysteine 448, cysteine 439/cysteine 445, cysteine 444/cysteine 469, and cysteine 457/cysteine 476. The Cell attachment site motif lies at 461–463; it reads RGD.

It belongs to the venom metalloproteinase (M12B) family. P-II subfamily. P-IId sub-subfamily. As to quaternary structure, homodimer; disulfide-linked (disintegrin). Requires Zn(2+) as cofactor. As to expression, expressed by the venom gland.

The protein localises to the secreted. Impairs hemostasis in the envenomed animal. This protein has not been identified in the venom. Its function is as follows. Inhibits ADP-induced platelet aggregation. Binds and inhibits integrins GPIIb/GPIIIa (ITGA2B/ITGB3), alpha-5/beta-1 (ITGA5/ITGB1), alpha-V/beta-3 (ITGAV/ITGB3), and alpha-V/beta-5 (ITGAV/ITGB5). It blocks cancer cell adhesion (tested on human breast cancer cell line MDA-MB-435) to fibronectin and vitronectin and thus prevents invasion of cancer cells. The polypeptide is Zinc metalloproteinase/disintegrin (Agkistrodon contortrix contortrix (Southern copperhead)).